A 122-amino-acid polypeptide reads, in one-letter code: uncharacterized protein (122 aa).

A run of 2 helical transmembrane segments spans residues 36 to 56 (SVRS…YSQF) and 72 to 92 (AVFL…FSTD).

The protein resides in the membrane. This is an uncharacterized protein from Saccharomyces cerevisiae (strain ATCC 204508 / S288c) (Baker's yeast).